The primary structure comprises 622 residues: Low affinity potassium transport system protein Kup (622 aa).

Transmembrane regions (helical) follow at residues 9-29, 49-69, 103-123, 137-157, 165-185, 213-233, 247-267, 276-296, 337-357, 363-383, 396-416, and 419-439; these read LPAI…TSPL, VFGF…IKYL, VIMG…TPAI, PQLD…LFMI, VGKL…GLGL, VSFI…ALYA, WFTV…ALLL, PFFL…AALA, IYIP…IVSF, LAAA…ILST, FVAL…TANL, and LLSG…VMTT.

Belongs to the HAK/KUP transporter (TC 2.A.72) family.

It localises to the cell inner membrane. The enzyme catalyses K(+)(in) + H(+)(in) = K(+)(out) + H(+)(out). In terms of biological role, responsible for the low-affinity transport of potassium into the cell. Likely operates as a K(+):H(+) symporter. The sequence is that of Low affinity potassium transport system protein Kup from Shigella boydii serotype 18 (strain CDC 3083-94 / BS512).